A 107-amino-acid polypeptide reads, in one-letter code: U1-lycotoxin-Ls1b (107 aa).

Residues 1 to 20 form the signal peptide; the sequence is MMKVLVVFALLVTLISYSSS. A propeptide spanning residues 21-41 is cleaved from the precursor; it reads EGIDDLEADELLSLMANEQTR. Intrachain disulfides connect cysteine 44–cysteine 59, cysteine 51–cysteine 68, cysteine 58–cysteine 86, and cysteine 70–cysteine 84.

This sequence belongs to the neurotoxin 19 (CSTX) family. 04 (U1-Lctx) subfamily. Expressed by the venom gland.

It localises to the secreted. The protein is U1-lycotoxin-Ls1b of Lycosa singoriensis (Wolf spider).